The chain runs to 393 residues: Phosphopentomutase (393 aa).

Mn(2+) is bound by residues Asp15, Asp288, His293, Asp329, His330, and His341.

It belongs to the phosphopentomutase family. It depends on Mn(2+) as a cofactor.

The protein resides in the cytoplasm. It carries out the reaction 2-deoxy-alpha-D-ribose 1-phosphate = 2-deoxy-D-ribose 5-phosphate. The catalysed reaction is alpha-D-ribose 1-phosphate = D-ribose 5-phosphate. Its pathway is carbohydrate degradation; 2-deoxy-D-ribose 1-phosphate degradation; D-glyceraldehyde 3-phosphate and acetaldehyde from 2-deoxy-alpha-D-ribose 1-phosphate: step 1/2. Functionally, isomerase that catalyzes the conversion of deoxy-ribose 1-phosphate (dRib-1-P) and ribose 1-phosphate (Rib-1-P) to deoxy-ribose 5-phosphate (dRib-5-P) and ribose 5-phosphate (Rib-5-P), respectively. The sequence is that of Phosphopentomutase from Halalkalibacterium halodurans (strain ATCC BAA-125 / DSM 18197 / FERM 7344 / JCM 9153 / C-125) (Bacillus halodurans).